We begin with the raw amino-acid sequence, 223 residues long: Thiamine-phosphate synthase (223 aa).

Residues 45 to 49 and Asn-77 contribute to the 4-amino-2-methyl-5-(diphosphooxymethyl)pyrimidine site; that span reads QYREK. Residues Asp-78 and Asp-97 each contribute to the Mg(2+) site. Thr-116 contributes to the 4-amino-2-methyl-5-(diphosphooxymethyl)pyrimidine binding site. 2-[(2R,5Z)-2-carboxy-4-methylthiazol-5(2H)-ylidene]ethyl phosphate is bound at residue 142-144; the sequence is SYT. Lys-145 is a 4-amino-2-methyl-5-(diphosphooxymethyl)pyrimidine binding site. 2-[(2R,5Z)-2-carboxy-4-methylthiazol-5(2H)-ylidene]ethyl phosphate-binding positions include Gly-173 and 193 to 194; that span reads VT.

The protein belongs to the thiamine-phosphate synthase family. Mg(2+) serves as cofactor.

It carries out the reaction 2-[(2R,5Z)-2-carboxy-4-methylthiazol-5(2H)-ylidene]ethyl phosphate + 4-amino-2-methyl-5-(diphosphooxymethyl)pyrimidine + 2 H(+) = thiamine phosphate + CO2 + diphosphate. The enzyme catalyses 2-(2-carboxy-4-methylthiazol-5-yl)ethyl phosphate + 4-amino-2-methyl-5-(diphosphooxymethyl)pyrimidine + 2 H(+) = thiamine phosphate + CO2 + diphosphate. The catalysed reaction is 4-methyl-5-(2-phosphooxyethyl)-thiazole + 4-amino-2-methyl-5-(diphosphooxymethyl)pyrimidine + H(+) = thiamine phosphate + diphosphate. The protein operates within cofactor biosynthesis; thiamine diphosphate biosynthesis; thiamine phosphate from 4-amino-2-methyl-5-diphosphomethylpyrimidine and 4-methyl-5-(2-phosphoethyl)-thiazole: step 1/1. Condenses 4-methyl-5-(beta-hydroxyethyl)thiazole monophosphate (THZ-P) and 2-methyl-4-amino-5-hydroxymethyl pyrimidine pyrophosphate (HMP-PP) to form thiamine monophosphate (TMP). This chain is Thiamine-phosphate synthase, found in Dictyoglomus thermophilum (strain ATCC 35947 / DSM 3960 / H-6-12).